A 318-amino-acid polypeptide reads, in one-letter code: Esterase FVEG_12639 (318 aa).

Residues serine 156, aspartate 255, and histidine 285 contribute to the active site.

It belongs to the AB hydrolase 3 family.

Functionally, esterase; part of the Fusarium detoxification of benzoxazolinone cluster 2 (FDB2) involved in the degradation of benzoxazolinones produced by the host plant. Maize, wheat, and rye produce the 2 benzoxazinone phytoanticipins 2,4-dihy-droxy-7-methoxy-1,4-benzoxazin-3-one (DIMBOA) and 2,4-dihydroxy-1,4-benzoxazin-3-one (DIBOA) that, due to their inherent instability once released, spontaneously degrade to the more stable corresponding benzoxazolinones, 6-methoxy-2-benzoxazolinone (MBOA) and 2-benzoxazolinone (BOA), respectively. The first step in the detoxification of benzoxazolinones involves the hydrolysis of the cyclic ester bond of benzoxazolinones by the FDB1 cluster gamma-lactamase MBL1 to aminophenols. MBL1 is able to convert BOA into 2-aminophenol (2-AP), as well as MBOA into 5-methoxy-2-aminophenol (2-AMP). The FDB2 cluster N-malonyltransferase FDB2/NAT1 then metabolizes aminophenols via N-malonylation to non-toxic malonamic acids. FDB2/NAT1 converts 2-AP into N-(2-hydroxyphenyl) malonamic acid (HPMA) and 2-AMP into N-(2-hydroxy-4-methoxyphenyl) malonamic acid (HMPMA). The duplicated dienlactone hydrolases DLH1 and DLH2 may provide redundant function for hydrolyzing the lactone moiety in the BOA molecule. The roles of the amidases an other enzymes encoded by the 2 FDB clusters have not been identified so far. The sequence is that of Esterase FVEG_12639 from Gibberella moniliformis (strain M3125 / FGSC 7600) (Maize ear and stalk rot fungus).